The chain runs to 398 residues: Acetate kinase (398 aa).

Asn10 is a Mg(2+) binding site. Lys17 is an ATP binding site. Substrate is bound at residue Arg91. The active-site Proton donor/acceptor is Asp148. ATP-binding positions include His208–Gly212, Asp283–Arg285, and Gly331–Asn335. Glu385 contacts Mg(2+).

The protein belongs to the acetokinase family. As to quaternary structure, homodimer. Mg(2+) is required as a cofactor. Mn(2+) serves as cofactor.

Its subcellular location is the cytoplasm. It carries out the reaction acetate + ATP = acetyl phosphate + ADP. The protein operates within metabolic intermediate biosynthesis; acetyl-CoA biosynthesis; acetyl-CoA from acetate: step 1/2. Functionally, catalyzes the formation of acetyl phosphate from acetate and ATP. Can also catalyze the reverse reaction. This is Acetate kinase from Shewanella pealeana (strain ATCC 700345 / ANG-SQ1).